The sequence spans 361 residues: KDEL-tailed cysteine endopeptidase CEP2 (361 aa).

The first 20 residues, 1-20 (MKKLLLIFLFSLVILQTACG), serve as a signal peptide directing secretion. Residues 21 to 127 (FDYDDKEIES…FMYDHENLSK (107 aa)) constitute a propeptide, activation peptide. N-linked (GlcNAc...) asparagine glycosylation is found at N75 and N124. Intrachain disulfides connect C149-C191, C183-C224, and C282-C333. The active site involves C152. Active-site residues include H288 and N308. The Prevents secretion from ER signature appears at 358 to 361 (KDEL).

The protein belongs to the peptidase C1 family. In terms of tissue distribution, expressed in roots, stems, rosette and cauline leaves, flowers, buds and green siliques. Found in the tip of young primary leaves, in very young root tips and at later stages in all tissues of lateral root, including the vascular bundle. Not expressed in lateral root primordia, while directly emerging through the epidermis.

Its subcellular location is the endoplasmic reticulum. Its function is as follows. Involved in the final stage of developmental programmed cell death and in intercalation of new cells. Cleaves extensins, thus probably supporting the final cell collapse. The chain is KDEL-tailed cysteine endopeptidase CEP2 from Arabidopsis thaliana (Mouse-ear cress).